Reading from the N-terminus, the 126-residue chain is UPF0738 protein BH2850 (126 aa).

The protein belongs to the UPF0738 family.

The chain is UPF0738 protein BH2850 from Halalkalibacterium halodurans (strain ATCC BAA-125 / DSM 18197 / FERM 7344 / JCM 9153 / C-125) (Bacillus halodurans).